The following is a 233-amino-acid chain: Demethylmenaquinone methyltransferase (233 aa).

S-adenosyl-L-methionine-binding positions include Thr60, Asp81, and 106 to 107; that span reads DA.

The protein belongs to the class I-like SAM-binding methyltransferase superfamily. MenG/UbiE family.

The catalysed reaction is a 2-demethylmenaquinol + S-adenosyl-L-methionine = a menaquinol + S-adenosyl-L-homocysteine + H(+). It functions in the pathway quinol/quinone metabolism; menaquinone biosynthesis; menaquinol from 1,4-dihydroxy-2-naphthoate: step 2/2. In terms of biological role, methyltransferase required for the conversion of demethylmenaquinol (DMKH2) to menaquinol (MKH2). The polypeptide is Demethylmenaquinone methyltransferase (Staphylococcus saprophyticus subsp. saprophyticus (strain ATCC 15305 / DSM 20229 / NCIMB 8711 / NCTC 7292 / S-41)).